Consider the following 62-residue polypeptide: Large ribosomal subunit protein bL28 (62 aa).

Belongs to the bacterial ribosomal protein bL28 family.

The polypeptide is Large ribosomal subunit protein bL28 (Onion yellows phytoplasma (strain OY-M)).